A 234-amino-acid chain; its full sequence is uncharacterized protein (234 aa).

6 helical membrane passes run 5–23 (LFYI…LWSF), 38–60 (IPTA…GFWV), 73–92 (AHIQ…AHGW), 127–149 (AITL…YIWL), 170–192 (GVAI…TVIS), and 197–217 (TQAG…ALAF).

It is found in the cell membrane. This is an uncharacterized protein from Archaeoglobus fulgidus (strain ATCC 49558 / DSM 4304 / JCM 9628 / NBRC 100126 / VC-16).